The primary structure comprises 488 residues: Transmembrane protein 39A (488 aa).

Asn31 and Asn39 each carry an N-linked (GlcNAc...) asparagine glycan. Helical transmembrane passes span 72–92 (SLLF…IQYI), 110–130 (TSLN…VMLA), 154–174 (VLIS…CWTL), 182–202 (SVLN…LCCF), 287–307 (EVLF…LCFV), 319–339 (CEHL…QLLP), 420–440 (LLNL…YSLL), and 446–466 (NHTL…FKLL).

It belongs to the TMEM39 family. As to quaternary structure, interacts with SACM1L, SEC23A and SEC24A.

Its subcellular location is the endoplasmic reticulum membrane. In terms of biological role, regulates autophagy by controlling the spatial distribution and levels of the intracellular phosphatidylinositol 4-phosphate (PtdIns(4)P) pools. Modulates (PtdIns(4)P) levels by regulating the ER-to-Golgi trafficking of the phosphatidylinositide phosphatase SACM1L. This chain is Transmembrane protein 39A (TMEM39A), found in Bos taurus (Bovine).